The sequence spans 373 residues: Type II secretion system protein L (373 aa).

The Cytoplasmic segment spans residues 1 to 214; that stretch reads MTAWRDTLGR…RRSDPMQRWN (214 aa). The chain crosses the membrane as a helical span at residues 215–233; sequence LLLAVAALVLLAVAGWLLL. Residues 234–373 are Periplasmic-facing; it reads DNRRQAADDL…AKEAADAAQR (140 aa).

The protein belongs to the GSP L family. As to quaternary structure, type II secretion system is composed of four main components: the outer membrane complex, the inner membrane complex, the cytoplasmic secretion ATPase and the periplasm-spanning pseudopilus. Forms homodimers. Interacts with XpsM/GspM. Interacts with XpsE/GspE and XpsF/GspF.

It is found in the cell inner membrane. In terms of biological role, inner membrane component of the type II secretion system required for the energy-dependent secretion of extracellular factors such as proteases and toxins from the periplasm. Plays a role in the complex assembly and recruits XpsM resulting in a stable complex in the inner membrane. Provides thus a link between the energy-providing XpsE protein in the cytoplasm and the rest of the T2SS machinery. This chain is Type II secretion system protein L (pefL), found in Xanthomonas campestris pv. campestris (strain ATCC 33913 / DSM 3586 / NCPPB 528 / LMG 568 / P 25).